The primary structure comprises 393 residues: Homogentisate phytyltransferase 1, chloroplastic (393 aa).

A chloroplast-targeting transit peptide spans 1-36; sequence MESLLSSSSLVSAAGGFCWKKQNLKLHSLSEIRVLR. Transmembrane regions (helical) follow at residues 108–128, 133–153, 170–190, 205–227, 232–252, 271–291, 314–334, 338–358, and 371–391; these read TVIG…EKVS, LLFT…IYIV, YLPL…VASF, PLFW…LPLL, FALV…QIAF, LIFA…FKDI, VFWT…LVGA, FIWS…TLWA, and ITSC…LLPF.

Belongs to the UbiA prenyltransferase family.

Its subcellular location is the plastid. The protein localises to the chloroplast membrane. The catalysed reaction is phytyl diphosphate + homogentisate + H(+) = 2-methyl-6-phytyl-1,4-benzene-1,4-diol + CO2 + diphosphate. The protein operates within cofactor biosynthesis; tocopherol biosynthesis. Its function is as follows. Involved in the synthesis of tocopherol (vitamin E). Catalyzes the condensation of homogentisate and phytyl diphosphate to form dimethylphytylhydrquinone. Low activity with geranylgeranyl diphosphate as substrate, but no activity with farnesyl diphosphate or solanesyl diphosphate. Tocopherol functions to limit lipid oxidation during seed desiccation, quiescence and germination and early seedling development. Protects thylakoid membrane lipids from photooxidation and is required for low-temperature adaptation. This Arabidopsis thaliana (Mouse-ear cress) protein is Homogentisate phytyltransferase 1, chloroplastic (HPT1).